Here is a 1934-residue protein sequence, read N- to C-terminus: Tudor domain-containing protein 15 (1934 aa).

6 consecutive Tudor domains span residues 59-117, 289-347, 531-589, 799-856, 1011-1070, and 1342-1401; these read NVEI…LFEL, CDNF…FILV, KPEP…FCEL, PYEI…FLLL, DSNK…FPEL, and KPLV…FLTV. The interval 1490–1510 is disordered; the sequence is VRPGDNEMKKGKSNESEGSMN. Basic and acidic residues predominate over residues 1491-1504; that stretch reads RPGDNEMKKGKSNE. 2 Tudor domains span residues 1574-1633 and 1780-1838; these read SIEK…IRNI and FIIP…PEEL.

The sequence is that of Tudor domain-containing protein 15 (TDRD15) from Homo sapiens (Human).